The chain runs to 596 residues: Sensor protein ChvG (596 aa).

The disordered stretch occupies residues 1-22 (MLKKTPETVSDSDDAEERGSER). Topologically, residues 1–47 (MLKKTPETVSDSDDAEERGSERRHRIHPLTIIRRIFGNAVFSSLTRR) are cytoplasmic. A helical membrane pass occupies residues 48 to 68 (ILFFNVAATVVLVGGILYLNQ). At 69 to 283 (FREGLIDARV…VHAERLAIMR (215 aa)) the chain is on the periplasmic side. The chain crosses the membrane as a helical span at residues 284–304 (VFGIATLVNIVLSLLLSSTIA). An HAMP domain is found at 301-356 (STIATPLRRLSAAAIRVRRGARTREEIPDFSARQDEIGNLSIALREMTTALYDRID). At 305 to 596 (TPLRRLSAAA…SLPAAETHER (292 aa)) the chain is on the cytoplasmic side. Residues 364 to 592 (DVSHELKNPL…RFTLSLPAAE (229 aa)) enclose the Histidine kinase domain. H367 bears the Phosphohistidine mark.

It is found in the cell inner membrane. The enzyme catalyses ATP + protein L-histidine = ADP + protein N-phospho-L-histidine.. Its function is as follows. Member of a two-component regulatory system ChvG/ChvI. Activates ChvI by phosphorylation (Potential). In Agrobacterium fabrum (strain C58 / ATCC 33970) (Agrobacterium tumefaciens (strain C58)), this protein is Sensor protein ChvG (chvG).